Here is a 544-residue protein sequence, read N- to C-terminus: Chaperonin GroEL 2 (544 aa).

Residues 29–32 (TLGP), 86–90 (DGTTT), G413, 482–484 (NVL), and D498 contribute to the ATP site.

It belongs to the chaperonin (HSP60) family. Forms a cylinder of 14 subunits composed of two heptameric rings stacked back-to-back. Interacts with the co-chaperonin GroES.

The protein resides in the cytoplasm. It catalyses the reaction ATP + H2O + a folded polypeptide = ADP + phosphate + an unfolded polypeptide.. Its function is as follows. Together with its co-chaperonin GroES, plays an essential role in assisting protein folding. The GroEL-GroES system forms a nano-cage that allows encapsulation of the non-native substrate proteins and provides a physical environment optimized to promote and accelerate protein folding. The protein is Chaperonin GroEL 2 of Roseiflexus sp. (strain RS-1).